The sequence spans 326 residues: Biotin synthase (326 aa).

The Radical SAM core domain maps to 48–277 (FGAGKVDLCS…SARIRMAGGR (230 aa)). The [4Fe-4S] cluster site is built by cysteine 66, cysteine 70, and cysteine 73. 4 residues coordinate [2Fe-2S] cluster: serine 110, cysteine 142, cysteine 202, and arginine 272.

It belongs to the radical SAM superfamily. Biotin synthase family. As to quaternary structure, homodimer. The cofactor is [4Fe-4S] cluster. It depends on [2Fe-2S] cluster as a cofactor.

It carries out the reaction (4R,5S)-dethiobiotin + (sulfur carrier)-SH + 2 reduced [2Fe-2S]-[ferredoxin] + 2 S-adenosyl-L-methionine = (sulfur carrier)-H + biotin + 2 5'-deoxyadenosine + 2 L-methionine + 2 oxidized [2Fe-2S]-[ferredoxin]. Its pathway is cofactor biosynthesis; biotin biosynthesis; biotin from 7,8-diaminononanoate: step 2/2. In terms of biological role, catalyzes the conversion of dethiobiotin (DTB) to biotin by the insertion of a sulfur atom into dethiobiotin via a radical-based mechanism. This Heliobacterium modesticaldum (strain ATCC 51547 / Ice1) protein is Biotin synthase.